The sequence spans 147 residues: Large ribosomal subunit protein bL9 (147 aa).

This sequence belongs to the bacterial ribosomal protein bL9 family.

Its function is as follows. Binds to the 23S rRNA. This Phocaeicola vulgatus (strain ATCC 8482 / DSM 1447 / JCM 5826 / CCUG 4940 / NBRC 14291 / NCTC 11154) (Bacteroides vulgatus) protein is Large ribosomal subunit protein bL9.